A 355-amino-acid chain; its full sequence is Poly(3-hydroxyalkanoate) polymerase subunit PhaC (355 aa).

The region spanning 68–333 (PLLIVYALVN…LAFPGGHIGI (266 aa)) is the AB hydrolase-1 domain. Cys148 is an active-site residue.

This sequence belongs to the PHA/PHB synthase family. Type III PhaC subfamily. As to quaternary structure, forms a heterodimer with PhaE, which may multimerize in the presence of 3-hydroxybutyryl-CoA.

It is found in the cytoplasm. The enzyme catalyses (3R)-3-hydroxybutanoyl-CoA + [(3R)-hydroxybutanoate](n) = [(3R)-hydroxybutanoate](n+1) + CoA. It participates in biopolymer metabolism; poly-(R)-3-hydroxybutanoate biosynthesis. Functionally, polymerizes D(-)-3-hydroxybutyryl-CoA to create PHB which consists of thousands of hydroxybutyrate molecules linked end to end. PHB serves as an intracellular energy reserve material when cells grow under conditions of nutrient limitation. The polypeptide is Poly(3-hydroxyalkanoate) polymerase subunit PhaC (Thiocystis violacea).